The following is a 355-amino-acid chain: Protein RecA (355 aa).

67-74 serves as a coordination point for ATP; the sequence is GPESSGKT.

It belongs to the RecA family.

The protein resides in the cytoplasm. Its function is as follows. Can catalyze the hydrolysis of ATP in the presence of single-stranded DNA, the ATP-dependent uptake of single-stranded DNA by duplex DNA, and the ATP-dependent hybridization of homologous single-stranded DNAs. It interacts with LexA causing its activation and leading to its autocatalytic cleavage. The polypeptide is Protein RecA (Shewanella amazonensis (strain ATCC BAA-1098 / SB2B)).